Reading from the N-terminus, the 290-residue chain is ATP synthase gamma chain (290 aa).

This sequence belongs to the ATPase gamma chain family. In terms of assembly, F-type ATPases have 2 components, CF(1) - the catalytic core - and CF(0) - the membrane proton channel. CF(1) has five subunits: alpha(3), beta(3), gamma(1), delta(1), epsilon(1). CF(0) has three main subunits: a, b and c.

It localises to the cell inner membrane. Functionally, produces ATP from ADP in the presence of a proton gradient across the membrane. The gamma chain is believed to be important in regulating ATPase activity and the flow of protons through the CF(0) complex. The sequence is that of ATP synthase gamma chain from Buchnera aphidicola subsp. Acyrthosiphon pisum (strain APS) (Acyrthosiphon pisum symbiotic bacterium).